The primary structure comprises 1939 residues: Myosin-2 (1939 aa).

The Myosin N-terminal SH3-like domain maps to 33 to 82; it reads DAKTSVFVAEPKESFVKGTIQSREGGKVTVKTEAGATLTVKEDQVFPMNP. Phosphothreonine is present on residues Thr64 and Thr69. The 697-residue stretch at 86–782 folds into the Myosin motor domain; it reads DKIEDMAMMT…LLGLLEEMRD (697 aa). Lys130 bears the N6,N6,N6-trimethyllysine mark. 179–186 provides a ligand contact to ATP; the sequence is GESGAGKT. Tyr389 is modified (phosphotyrosine). Ser392 carries the phosphoserine modification. A Phosphothreonine modification is found at Thr419. Residue Ser625 is modified to Phosphoserine. The interval 659–681 is actin-binding; it reads LNKLMTNLRSTHPHFVRCIIPNE. A Pros-methylhistidine modification is found at His757. The segment at 761–775 is actin-binding; that stretch reads KFGHTKVFFKAGLLG. Residues 785–814 enclose the IQ domain; sequence LAQLITRTQARCRGFLARVEYQKMVERRES. The stretch at 843-1939 forms a coiled coil; it reads LLKSAESEKE…EVHTKVISEE (1097 aa). 2 positions are modified to phosphoserine: Ser1092 and Ser1096. Disordered regions lie at residues 1126–1147 and 1153–1172; these read IEAE…SREL and RLEE…KKRE. Residues 1128–1147 show a composition bias toward basic and acidic residues; that stretch reads AERASRAKAEKQRSDLSREL. A phosphoserine mark is found at Ser1162 and Ser1237. A Phosphothreonine modification is found at Thr1241. At Ser1243 the chain carries Phosphoserine. At Thr1255 the chain carries Phosphothreonine. A Phosphoserine modification is found at Ser1261. The residue at position 1286 (Thr1286) is a Phosphothreonine. Ser1288, Ser1292, Ser1303, and Ser1306 each carry phosphoserine. A Phosphotyrosine modification is found at Tyr1464. Thr1467 carries the post-translational modification Phosphothreonine. Ser1474 bears the Phosphoserine mark. Tyr1492 is subject to Phosphotyrosine. At Ser1495 the chain carries Phosphoserine. A Phosphothreonine modification is found at Thr1501. Ser1514 carries the post-translational modification Phosphoserine. Thr1517 carries the phosphothreonine modification. Phosphoserine occurs at positions 1542, 1554, 1574, 1600, 1603, 1714, and 1726. Phosphothreonine occurs at positions 1730 and 1736. Position 1739 is a phosphoserine (Ser1739). Positions 1885-1915 are disordered; that stretch reads QAEEAEEQSNTNLSKFRKLQHELEEAEERAD.

This sequence belongs to the TRAFAC class myosin-kinesin ATPase superfamily. Myosin family. Muscle myosin is a hexameric protein that consists of 2 heavy chain subunits (MHC), 2 alkali light chain subunits (MLC) and 2 regulatory light chain subunits (MLC-2). Interacts with GCSAM.

It is found in the cytoplasm. It localises to the myofibril. Functionally, myosins are actin-based motor molecules with ATPase activity essential for muscle contraction. The protein is Myosin-2 (MYH2) of Sus scrofa (Pig).